The sequence spans 442 residues: Protein translocase subunit SecY (442 aa).

10 helical membrane-spanning segments follow: residues 24-44 (FLFLAIIVYRIGAHIPVPGIN), 76-96 (IFALGIMPYISASIIMQLMTA), 125-145 (VLALVQAIGMSVGLGSQGVAF), 149-169 (FGFYFVAVTTFVAGAMFMMWL), 178-198 (VGNGISMLIFAGIVAGLPRAI), 212-232 (IFALIGVGLLAVAIIAFVVFI), 269-289 (VIPAIFASSILLFPASLGSWF), 312-332 (NILLFTAGIVFFCFFYTALMF), 363-383 (GVLTRLTMFGALYMTAVCLLP), and 385-405 (FLVVAAHVPFYLGGTSLLIVV).

Belongs to the SecY/SEC61-alpha family. As to quaternary structure, component of the Sec protein translocase complex. Heterotrimer consisting of SecY, SecE and SecG subunits. The heterotrimers can form oligomers, although 1 heterotrimer is thought to be able to translocate proteins. Interacts with the ribosome. Interacts with SecDF, and other proteins may be involved. Interacts with SecA.

It localises to the cell inner membrane. The central subunit of the protein translocation channel SecYEG. Consists of two halves formed by TMs 1-5 and 6-10. These two domains form a lateral gate at the front which open onto the bilayer between TMs 2 and 7, and are clamped together by SecE at the back. The channel is closed by both a pore ring composed of hydrophobic SecY resides and a short helix (helix 2A) on the extracellular side of the membrane which forms a plug. The plug probably moves laterally to allow the channel to open. The ring and the pore may move independently. This Pseudomonas aeruginosa (strain ATCC 15692 / DSM 22644 / CIP 104116 / JCM 14847 / LMG 12228 / 1C / PRS 101 / PAO1) protein is Protein translocase subunit SecY.